A 228-amino-acid polypeptide reads, in one-letter code: Large ribosomal subunit protein bL25 (228 aa).

The segment at 198–228 is disordered; sequence AAIAEAQSAEAAEEKAEAEAEATNEKNDTEE. Residues 209 to 228 show a composition bias toward basic and acidic residues; sequence AEEKAEAEAEATNEKNDTEE.

Belongs to the bacterial ribosomal protein bL25 family. CTC subfamily. Part of the 50S ribosomal subunit; part of the 5S rRNA/L5/L18/L25 subcomplex. Contacts the 5S rRNA. Binds to the 5S rRNA independently of L5 and L18.

In terms of biological role, this is one of the proteins that binds to the 5S RNA in the ribosome where it forms part of the central protuberance. The chain is Large ribosomal subunit protein bL25 from Methylorubrum populi (strain ATCC BAA-705 / NCIMB 13946 / BJ001) (Methylobacterium populi).